We begin with the raw amino-acid sequence, 310 residues long: Malate dehydrogenase (310 aa).

Residues 7–12 (GAGNVG) and Asp-32 each bind NAD(+). Substrate contacts are provided by Arg-81 and Arg-87. NAD(+) is bound by residues Asn-94 and 117-119 (VSN). Substrate-binding residues include Asn-119 and Arg-150. His-174 serves as the catalytic Proton acceptor.

It belongs to the LDH/MDH superfamily. MDH type 3 family. In terms of assembly, homotetramer; arranged as a dimer of dimers.

The enzyme catalyses (S)-malate + NAD(+) = oxaloacetate + NADH + H(+). Its function is as follows. Catalyzes the reversible oxidation of malate to oxaloacetate. This chain is Malate dehydrogenase, found in Chlorobaculum parvum (strain DSM 263 / NCIMB 8327) (Chlorobium vibrioforme subsp. thiosulfatophilum).